The following is a 1049-amino-acid chain: Solvent-resistant pump membrane transporter SrpB (1049 aa).

12 helical membrane-spanning segments follow: residues 10–30 (IFAWVLAIVAMLAGALSLAKM), 339–359 (SVVHTIFEAVVLVFLVMYLFL), 366–386 (LIPTLAVPVVLLATFALLPYF), 392–412 (VLTMYAMVLAIGLLVDDAIVV), 440–460 (GALVGIGMVLSAVFVPMAFFG), 470–490 (FAITIVVCMGLSILVALVFTP), 542–562 (LAFLLITGGTGYLFTQIPKAF), 871–891 (APLLYALTVLIVFLCLAALYE), 895–915 (VPVSVIMVVPLGILGAVLATL), 927–947 (VGLMTTVGLSAKNAILIVEFA), 973–993 (ILMTSLAFTFGVLPMAIASGA), and 1008–1028 (GMITATVLAVFFVPLFYVVVV).

This sequence belongs to the resistance-nodulation-cell division (RND) (TC 2.A.6) family.

It is found in the cell inner membrane. In terms of biological role, the inner membrane transporter component of an organic solvent efflux pump. Involved in export of a number of low log POW compounds including hexane (log POW 3.5), toluene (log POW 2.5) and dimethylphthalate (log POW 2.3). The solvent resistance phenotype has been postulated to depend on the operon expression level. The sequence is that of Solvent-resistant pump membrane transporter SrpB (srpB) from Pseudomonas putida (Arthrobacter siderocapsulatus).